Consider the following 643-residue polypeptide: Phosphomethylpyrimidine synthase (643 aa).

Residues N248, M277, Y306, H342, 362–364 (SRG), 403–406 (DGLR), and E442 contribute to the substrate site. H446 is a Zn(2+) binding site. Y469 lines the substrate pocket. H510 is a Zn(2+) binding site. Positions 590, 593, and 598 each coordinate [4Fe-4S] cluster.

The protein belongs to the ThiC family. In terms of assembly, homodimer. Requires [4Fe-4S] cluster as cofactor.

The catalysed reaction is 5-amino-1-(5-phospho-beta-D-ribosyl)imidazole + S-adenosyl-L-methionine = 4-amino-2-methyl-5-(phosphooxymethyl)pyrimidine + CO + 5'-deoxyadenosine + formate + L-methionine + 3 H(+). Its pathway is cofactor biosynthesis; thiamine diphosphate biosynthesis. Functionally, catalyzes the synthesis of the hydroxymethylpyrimidine phosphate (HMP-P) moiety of thiamine from aminoimidazole ribotide (AIR) in a radical S-adenosyl-L-methionine (SAM)-dependent reaction. This Burkholderia pseudomallei (strain 1106a) protein is Phosphomethylpyrimidine synthase.